The chain runs to 258 residues: NAD(P)H-hydrate epimerase (258 aa).

The YjeF N-terminal domain maps to 15 to 244; it reads AFQLDQELMS…RIAKEYGIED (230 aa). 75-79 contributes to the (6S)-NADPHX binding site; it reads NNGGD. The K(+) site is built by N76 and D145. (6S)-NADPHX is bound by residues 149 to 155 and D181; that span reads GFSFKPP. S184 lines the K(+) pocket.

This sequence belongs to the NnrE/AIBP family. Requires K(+) as cofactor.

The protein localises to the cytoplasm. It is found in the mitochondrion. The catalysed reaction is (6R)-NADHX = (6S)-NADHX. It carries out the reaction (6R)-NADPHX = (6S)-NADPHX. Functionally, catalyzes the epimerization of the S- and R-forms of NAD(P)HX, a damaged form of NAD(P)H that is a result of enzymatic or heat-dependent hydration. This is a prerequisite for the S-specific NAD(P)H-hydrate dehydratase to allow the repair of both epimers of NAD(P)HX. The sequence is that of NAD(P)H-hydrate epimerase from Candida albicans (strain SC5314 / ATCC MYA-2876) (Yeast).